The primary structure comprises 38 residues: DNA binding protein ORF8 (38 aa).

The protein belongs to the microviridae J protein family.

The protein localises to the virion. The protein resides in the host cytoplasm. Functionally, mediates ssDNA packaging into virion, it locates to the internal surface of the capsid, thereby displacing the internal scaffolding protein during virion formation. Additionally, protein ORF8 plays a role in viral attachment to the host cell. The protein is DNA binding protein ORF8 of Spiroplasma melliferum (SpV4).